A 287-amino-acid chain; its full sequence is Festuclavine synthase I (287 aa).

The protein belongs to the fgaFS/easG family.

The catalysed reaction is festuclavine + NAD(+) = 6,8-dimethyl-6,7-didehydroergoline + NADH + H(+). The protein operates within alkaloid biosynthesis; ergot alkaloid biosynthesis. Functionally, festuclavine synthase; part of the gene cluster that mediates the biosynthesis of isofumigaclavines, fungal ergot alkaloids. The tryptophan dimethylallyltransferase ifgA catalyzes the first step of ergot alkaloid biosynthesis by condensing dimethylallyl diphosphate (DMAP) and tryptophan to form 4-dimethylallyl-L-tryptophan. The second step is catalyzed by the methyltransferase ifgB that methylates 4-dimethylallyl-L-tryptophan in the presence of S-adenosyl-L-methionine, resulting in the formation of N-methyl-dimethylallyl-L-tryptophan. The catalase ifgD and the FAD-dependent oxidoreductase ifgC then transform N-methyl-dimethylallyl-L-tryptophan to chanoclavine-I which is further oxidized by ifgE in the presence of NAD(+), resulting in the formation of chanoclavine-I aldehyde. The chanoclavine-I aldehyde reductases ifgG and/or fgaOx3 reduce chanoclavine-I aldehyde to dihydrochanoclavine-I aldehyde that spontaneously dehydrates to form 6,8-dimethyl-6,7-didehydroergoline. The festuclavine dehydrogenases ifgF1 and/or ifgF2 then catalyze the reduction of 6,8-dimethyl-6,7-didehydroergoline to form festuclavine. Hydrolysis of festuclavine by a yet undetermined cytochrome P450 monooxygenase (called ifgH) then leads to the formation of isofumigaclavine B which is in turn acetylated by ifgI to isofumigaclavine A. Penicillium roqueforti has interestingly at least two sets of genes for the consumption of chanoclavine-I aldehyde on three different loci, the OYEs ifgG/fgaOx3 and the festuclavine synthase homologs ifgF1/ifgF2. The reason for the duplication of these genes is unclear, probably to ensure the conversion of chanoclavine-I aldehyde by differential gene expression under various environmental conditions. The chain is Festuclavine synthase I from Penicillium roqueforti (strain FM164).